The primary structure comprises 1186 residues: Pumilio homolog 1 (1186 aa).

Serine 2 carries the N-acetylserine modification. The residue at position 19 (serine 19) is a Phosphoserine. The segment at 22 to 73 is disordered; the sequence is LKHHPQEPANPNMPVVLTSGTGSQAQPQPAANQALAAGTHSSPVPGSIGVAG. Residues 45-58 show a composition bias toward low complexity; sequence QAQPQPAANQALAA. Residues serine 75, serine 98, and serine 106 each carry the phosphoserine modification. Threonine 112 carries the post-translational modification Phosphothreonine. Residues serine 124, serine 159, serine 197, serine 209, and serine 229 each carry the phosphoserine modification. The segment at 233–272 is disordered; the sequence is SCLRKGGFGPRDADSDENDKGEKKNKGTFDGDKLGDLKEE. Residues 250-272 show a composition bias toward basic and acidic residues; that stretch reads NDKGEKKNKGTFDGDKLGDLKEE. Serine 305 carries the post-translational modification Phosphoserine. The span at 485–502 shows a compositional bias: low complexity; it reads TNSANQQTTPQAQQGQQQ. Disordered regions lie at residues 485–524 and 613–648; these read TNSA…GQQT and AGTT…FYGN. Residues 511–524 show a composition bias toward polar residues; that stretch reads RPLTPNQNQQGQQT. Threonine 514 bears the Phosphothreonine mark. Positions 626-639 are enriched in low complexity; sequence QQPQPQPQQQPNNN. Residues serine 709 and serine 714 each carry the phosphoserine modification. The segment at 742 to 775 is disordered; that stretch reads GPVGMPLPSQGPGHSQTPPPSLSSHGSSSSLNLG. Low complexity predominate over residues 763 to 775; sequence LSSHGSSSSLNLG. Arginine 796 is subject to Omega-N-methylarginine. A phosphoserine mark is found at serine 806 and serine 822. The region spanning 828 to 1168 is the PUM-HD domain; the sequence is GRSRLLEDFR…HILAKLEKYY (341 aa). Pumilio repeat units lie at residues 848–883, 884–919, 920–955, 956–991, 992–1027, 1028–1063, 1064–1099, and 1103–1142; these read EIAG…LVFN, EILQ…ALAE, RIRG…EMVR, ELDG…FIID, AFKG…PILE, ELHQ…KIVA, EIRG…VLID, and TMND…IVMH. The segment at 863-867 is adenine-nucleotide binding in RNA target; it reads SRFIQ. The interval 899 to 903 is uracil-nucleotide binding in RNA target; that stretch reads NYVIQ. Residues 935–939 are adenine-nucleotide binding in RNA target; the sequence is CRVIQ. A non-specific-nucleotide binding in RNA target region spans residues 971 to 975; the sequence is NHVVQ. An adenine-nucleotide binding in RNA target region spans residues 1007 to 1011; sequence CRVIQ. A uracil-nucleotide binding in RNA target region spans residues 1043-1047; the sequence is NYVIQ. Guanine-nucleotide binding in RNA target regions lie at residues 1079–1083 and 1080–1083; these read SNVVE and NVVE. A uracil-nucleotide binding in RNA target region spans residues 1122 to 1126; that stretch reads NYVVQ.

In terms of assembly, recruits the CCR4-POP2-NOT deadenylase leading to translational inhibition and mRNA degradation. Interacts with TRIM71 (via NHL repeats) in an RNA-dependent manner. In terms of processing, phosphorylation at Ser-714 promotes RNA-binding activity. Following growth factor stimulation phosphorylated at Ser-714, promoting binding to the 3'-UTR of CDKN1B/p27 mRNA.

Its subcellular location is the cytoplasm. The protein resides in the P-body. It localises to the cytoplasmic granule. In terms of biological role, sequence-specific RNA-binding protein that acts as a post-transcriptional repressor by binding the 3'-UTR of mRNA targets. Binds to an RNA consensus sequence, the Pumilio Response Element (PRE), 5'-UGUANAUA-3', that is related to the Nanos Response Element (NRE). Mediates post-transcriptional repression of transcripts via different mechanisms: acts via direct recruitment of the CCR4-POP2-NOT deadenylase leading to translational inhibition and mRNA degradation. Also mediates deadenylation-independent repression by promoting accessibility of miRNAs. Following growth factor stimulation, phosphorylated and binds to the 3'-UTR of CDKN1B/p27 mRNA, inducing a local conformational change that exposes miRNA-binding sites, promoting association of miR-221 and miR-222, efficient suppression of CDKN1B/p27 expression, and rapid entry to the cell cycle. Acts as a post-transcriptional repressor of E2F3 mRNAs by binding to its 3'-UTR and facilitating miRNA regulation. Represses a program of genes necessary to maintain genomic stability such as key mitotic, DNA repair and DNA replication factors. Its ability to repress those target mRNAs is regulated by the lncRNA NORAD (non-coding RNA activated by DNA damage) which, due to its high abundance and multitude of PUMILIO binding sites, is able to sequester a significant fraction of PUM1 and PUM2 in the cytoplasm. Involved in neuronal functions by regulating ATXN1 mRNA levels: acts by binding to the 3'-UTR of ATXN1 transcripts, leading to their down-regulation independently of the miRNA machinery. Plays a role in cytoplasmic sensing of viral infection. In testis, acts as a post-transcriptional regulator of spermatogenesis by binding to the 3'-UTR of mRNAs coding for regulators of p53/TP53. Involved in embryonic stem cell renewal by facilitating the exit from the ground state: acts by targeting mRNAs coding for naive pluripotency transcription factors and accelerates their down-regulation at the onset of differentiation. Binds specifically to miRNA MIR199A precursor, with PUM2, regulates miRNA MIR199A expression at a postranscriptional level. This Pongo abelii (Sumatran orangutan) protein is Pumilio homolog 1 (PUM1).